The primary structure comprises 195 residues: Imidazoleglycerol-phosphate dehydratase (195 aa).

The protein belongs to the imidazoleglycerol-phosphate dehydratase family.

The protein localises to the cytoplasm. It carries out the reaction D-erythro-1-(imidazol-4-yl)glycerol 3-phosphate = 3-(imidazol-4-yl)-2-oxopropyl phosphate + H2O. It participates in amino-acid biosynthesis; L-histidine biosynthesis; L-histidine from 5-phospho-alpha-D-ribose 1-diphosphate: step 6/9. The chain is Imidazoleglycerol-phosphate dehydratase from Cupriavidus pinatubonensis (strain JMP 134 / LMG 1197) (Cupriavidus necator (strain JMP 134)).